The following is a 391-amino-acid chain: 4-hydroxy-3-methylbut-2-en-1-yl diphosphate synthase (flavodoxin) (391 aa).

Cys281, Cys284, Cys316, and Glu323 together coordinate [4Fe-4S] cluster. Residues 372–391 are disordered; the sequence is EMGGEDGQGGIKGSPVVSVS.

This sequence belongs to the IspG family. It depends on [4Fe-4S] cluster as a cofactor.

The enzyme catalyses (2E)-4-hydroxy-3-methylbut-2-enyl diphosphate + oxidized [flavodoxin] + H2O + 2 H(+) = 2-C-methyl-D-erythritol 2,4-cyclic diphosphate + reduced [flavodoxin]. It functions in the pathway isoprenoid biosynthesis; isopentenyl diphosphate biosynthesis via DXP pathway; isopentenyl diphosphate from 1-deoxy-D-xylulose 5-phosphate: step 5/6. Its function is as follows. Converts 2C-methyl-D-erythritol 2,4-cyclodiphosphate (ME-2,4cPP) into 1-hydroxy-2-methyl-2-(E)-butenyl 4-diphosphate. In Renibacterium salmoninarum (strain ATCC 33209 / DSM 20767 / JCM 11484 / NBRC 15589 / NCIMB 2235), this protein is 4-hydroxy-3-methylbut-2-en-1-yl diphosphate synthase (flavodoxin).